Consider the following 621-residue polypeptide: 1-deoxy-D-xylulose-5-phosphate synthase (621 aa).

Residues His-80 and Gly-121–Ser-123 each bind thiamine diphosphate. Asp-152 contacts Mg(2+). Thiamine diphosphate contacts are provided by residues Gly-153–Ala-154, Asn-181, Tyr-288, and Glu-370. Asn-181 is a binding site for Mg(2+).

The protein belongs to the transketolase family. DXPS subfamily. Homodimer. Mg(2+) is required as a cofactor. Requires thiamine diphosphate as cofactor.

The catalysed reaction is D-glyceraldehyde 3-phosphate + pyruvate + H(+) = 1-deoxy-D-xylulose 5-phosphate + CO2. It participates in metabolic intermediate biosynthesis; 1-deoxy-D-xylulose 5-phosphate biosynthesis; 1-deoxy-D-xylulose 5-phosphate from D-glyceraldehyde 3-phosphate and pyruvate: step 1/1. Functionally, catalyzes the acyloin condensation reaction between C atoms 2 and 3 of pyruvate and glyceraldehyde 3-phosphate to yield 1-deoxy-D-xylulose-5-phosphate (DXP). The protein is 1-deoxy-D-xylulose-5-phosphate synthase of Vibrio campbellii (strain ATCC BAA-1116).